Reading from the N-terminus, the 499-residue chain is uncharacterized protein (499 aa).

12 helical membrane-spanning segments follow: residues 51 to 71 (LLFR…LVAF), 98 to 118 (IIAS…TLLM), 127 to 147 (LAFI…CHNF), 155 to 175 (LVLG…LTMI), 187 to 207 (YLFA…YAVL), 220 to 240 (WLFI…YFII), 301 to 321 (CLYG…YTSL), 325 to 345 (YMTI…SFLS), 352 to 372 (GIIL…LLAC), 378 to 398 (VLYF…GLNV), 412 to 432 (ATAI…AGQI), and 444 to 464 (LTSL…IFFL).

Belongs to the major facilitator superfamily. Allantoate permease family.

The protein localises to the golgi apparatus. It is found in the membrane. This is an uncharacterized protein from Schizosaccharomyces pombe (strain 972 / ATCC 24843) (Fission yeast).